A 71-amino-acid polypeptide reads, in one-letter code: MSKDDLIQFTGTVLELLPNATFRVKLENDHIIIAHTSGRMRKNRIRILLGDKVTVEMTPYDLTKGRVIHRH.

An S1-like domain is found at 1–71; the sequence is MSKDDLIQFT…LTKGRVIHRH (71 aa).

The protein belongs to the IF-1 family. In terms of assembly, component of the 30S ribosomal translation pre-initiation complex which assembles on the 30S ribosome in the order IF-2 and IF-3, IF-1 and N-formylmethionyl-tRNA(fMet); mRNA recruitment can occur at any time during PIC assembly.

The protein resides in the cytoplasm. Its function is as follows. One of the essential components for the initiation of protein synthesis. Stabilizes the binding of IF-2 and IF-3 on the 30S subunit to which N-formylmethionyl-tRNA(fMet) subsequently binds. Helps modulate mRNA selection, yielding the 30S pre-initiation complex (PIC). Upon addition of the 50S ribosomal subunit IF-1, IF-2 and IF-3 are released leaving the mature 70S translation initiation complex. This Rickettsia prowazekii (strain Madrid E) protein is Translation initiation factor IF-1.